Consider the following 308-residue polypeptide: uncharacterized protein (308 aa).

Positions 1–19 (MKLLLILILIINNYNLCLS) are cleaved as a signal peptide. 2 N-linked (GlcNAc...) asparagine glycosylation sites follow: N25 and N300.

Its subcellular location is the secreted. This is an uncharacterized protein from Dictyostelium discoideum (Social amoeba).